A 523-amino-acid chain; its full sequence is GMP synthase [glutamine-hydrolyzing] (523 aa).

Residues lysine 8–lysine 205 enclose the Glutamine amidotransferase type-1 domain. Residue cysteine 85 is the Nucleophile of the active site. Residues histidine 179 and glutamate 181 contribute to the active site. The region spanning tryptophan 206–arginine 398 is the GMPS ATP-PPase domain. Serine 233 to serine 239 contributes to the ATP binding site.

As to quaternary structure, homodimer.

The enzyme catalyses XMP + L-glutamine + ATP + H2O = GMP + L-glutamate + AMP + diphosphate + 2 H(+). Its pathway is purine metabolism; GMP biosynthesis; GMP from XMP (L-Gln route): step 1/1. Catalyzes the synthesis of GMP from XMP. This chain is GMP synthase [glutamine-hydrolyzing], found in Actinobacillus pleuropneumoniae serotype 5b (strain L20).